We begin with the raw amino-acid sequence, 1610 residues long: Adenylate cyclase type 10 (1610 aa).

2 consecutive Guanylate cyclase domains span residues valine 42 to glutamine 179 and threonine 293 to methionine 418. The Mg(2+) site is built by aspartate 47 and isoleucine 48. An ATP-binding site is contributed by aspartate 47–threonine 52. Lysine 95 is a hydrogencarbonate binding site. Aspartate 99 lines the Mg(2+) pocket. Aspartate 99 and lysine 144 together coordinate ATP. Residues valine 167, arginine 176, and methionine 337 each coordinate hydrogencarbonate. ATP is bound by residues valine 406 and asparagine 412–arginine 416.

The protein belongs to the adenylyl cyclase class-4/guanylyl cyclase family. It depends on Mg(2+) as a cofactor. The cofactor is Mn(2+). Cleavage may occur to generate the active 48 kDa form. As to expression, detected in airway epithelial cells and testis (at protein level). Weakly expressed in multiple tissues. Expressed in brain, heart, kidney, liver, lung, pancreas, peripheral blood leukocytes, placenta, skeletal muscle, stomach, thymus, airway epithelial cells, duodenum, jejunum and ileum. Very low level of expression in bone.

The protein resides in the cell membrane. The protein localises to the cytoplasm. It localises to the cytoskeleton. Its subcellular location is the perinuclear region. It is found in the nucleus. The protein resides in the cell projection. The protein localises to the cilium. It localises to the mitochondrion. The catalysed reaction is ATP = 3',5'-cyclic AMP + diphosphate. With respect to regulation, activated by manganese or magnesium ions. In the presence of magnesium ions, the enzyme is activated by bicarbonate. In the presence of manganese ions, the enzyme is inhibited by bicarbonate. In the absence of magnesium and bicarbonate, the enzyme is weakly activated by calcium. Calcium mildly increases the enzyme activity, also in the presence of magnesium ions. In terms of biological role, catalyzes the formation of the signaling molecule cAMP. May function as sensor that mediates responses to changes in cellular bicarbonate and CO(2) levels. Has a critical role in mammalian spermatogenesis by producing the cAMP which regulates cAMP-responsive nuclear factors indispensable for sperm maturation in the epididymis. Induces capacitation, the maturational process that sperm undergo prior to fertilization. Involved in ciliary beat regulation. This is Adenylate cyclase type 10 (ADCY10) from Homo sapiens (Human).